The following is a 434-amino-acid chain: Putative DD-carboxypeptidase TP_0574 (434 aa).

A signal peptide spans 1 to 19 (MKVKYALLSAGALQLLVVG). C20 is lipidated: N-palmitoyl cysteine. C20 carries S-diacylglycerol cysteine lipidation.

In terms of assembly, probably a monomer; a non-lipidated construct (residues 22-434) is monomeric in solution but crystallizes as a homodimer. The cofactor is Zn(2+). The N-terminus is blocked. Present as a doublet of low abundance 48 kDa and high abundance 47 kDa proteins. The longer form is probably due to readthrough of the stop codon; the extra amino acids at the C-terminus would be X-Lys-Arg-Gly-Val-Leu-Ser-Arg-Val-Ser, a peptide antibody against this sequence detects only the 48 kDa form.

Its subcellular location is the cell inner membrane. Its function is as follows. A possible D,D-carboxypeptidase, that releases amino acids sequentially from a proteins C-terminus. Has zinc-dependent carboxypeptidase activity on synthetic depsipeptide substrates. May serve to decrease cross-linking of peptidoglycan, promoting the highly sinusous motility of this spirochaete. Overexpression of the whole protein in E.coli leads to aberrant cell morphology and extrusion of the cytoplasm, while overexpression of a construct with the first 62 resides of the protein fused to PhoA does have this effect, suggesting the whole protein, not the lipoprotein moiety, is toxic. Binds penicillin. Penicillin binding is covalent, does not require lipidation, and is zinc-dependent. While this protein has beta-lactamase activity in vitro, that is probably not its role in vivo, as T.pallidum is very sensitive to penicillin antibiotics. A pathogen-specific membrane antigen. Most abundant of the membrane lipoproteins, only found in pathogenic treponemes, suggesting that it is an important structural moiety in the cell envelope of virulent treponemal subspecies. A lipopeptide corresponding to the first 6 mature residues induces host (human and mouse) cytokine release by monocyte cell lines via TLR2 and CD14; nonlipidated protein does not stimulate host cells. Stimulates host (human) dendritic cell maturation to become MHC class II-positive antigen presenting cells via TLR2, which depends on lipidation; nonlipidated protein does not stimulate maturation. This chain is Putative DD-carboxypeptidase TP_0574, found in Treponema pallidum (strain Nichols).